The sequence spans 365 residues: Alanine racemase (365 aa).

The Proton acceptor; specific for D-alanine role is filled by Lys-32. An N6-(pyridoxal phosphate)lysine modification is found at Lys-32. Residue Arg-128 coordinates substrate. Residue Tyr-257 is the Proton acceptor; specific for L-alanine of the active site. Met-305 serves as a coordination point for substrate.

This sequence belongs to the alanine racemase family. Requires pyridoxal 5'-phosphate as cofactor.

The enzyme catalyses L-alanine = D-alanine. The protein operates within amino-acid biosynthesis; D-alanine biosynthesis; D-alanine from L-alanine: step 1/1. Functionally, catalyzes the interconversion of L-alanine and D-alanine. May also act on other amino acids. In Francisella tularensis subsp. tularensis (strain SCHU S4 / Schu 4), this protein is Alanine racemase (alr).